A 322-amino-acid polypeptide reads, in one-letter code: Ribosomal RNA small subunit methyltransferase H (322 aa).

S-adenosyl-L-methionine contacts are provided by residues 43–45, D60, F86, D104, and Q111; that span reads GGY.

It belongs to the methyltransferase superfamily. RsmH family.

The protein localises to the cytoplasm. The enzyme catalyses cytidine(1402) in 16S rRNA + S-adenosyl-L-methionine = N(4)-methylcytidine(1402) in 16S rRNA + S-adenosyl-L-homocysteine + H(+). Specifically methylates the N4 position of cytidine in position 1402 (C1402) of 16S rRNA. The sequence is that of Ribosomal RNA small subunit methyltransferase H from Caulobacter sp. (strain K31).